Reading from the N-terminus, the 483-residue chain is ATP synthase subunit beta (483 aa).

An ATP-binding site is contributed by 168-175; that stretch reads GGAGVGKT.

The protein belongs to the ATPase alpha/beta chains family. F-type ATPases have 2 components, CF(1) - the catalytic core - and CF(0) - the membrane proton channel. CF(1) has five subunits: alpha(3), beta(3), gamma(1), delta(1), epsilon(1). CF(0) has three main subunits: a(1), b(2) and c(9-12). The alpha and beta chains form an alternating ring which encloses part of the gamma chain. CF(1) is attached to CF(0) by a central stalk formed by the gamma and epsilon chains, while a peripheral stalk is formed by the delta and b chains.

Its subcellular location is the cell membrane. It catalyses the reaction ATP + H2O + 4 H(+)(in) = ADP + phosphate + 5 H(+)(out). Produces ATP from ADP in the presence of a proton gradient across the membrane. The catalytic sites are hosted primarily by the beta subunits. The sequence is that of ATP synthase subunit beta from Mycobacterium ulcerans (strain Agy99).